Here is a 109-residue protein sequence, read N- to C-terminus: Nucleoid-associated protein HS_1309 (109 aa).

This sequence belongs to the YbaB/EbfC family. Homodimer.

The protein localises to the cytoplasm. It localises to the nucleoid. In terms of biological role, binds to DNA and alters its conformation. May be involved in regulation of gene expression, nucleoid organization and DNA protection. The polypeptide is Nucleoid-associated protein HS_1309 (Histophilus somni (strain 129Pt) (Haemophilus somnus)).